The sequence spans 161 residues: Cyclic pyranopterin monophosphate synthase (161 aa).

Residues 75–77 and 113–114 each bind substrate; these read LCH and ME. The active site involves D128.

The protein belongs to the MoaC family. Homohexamer; trimer of dimers.

The catalysed reaction is (8S)-3',8-cyclo-7,8-dihydroguanosine 5'-triphosphate = cyclic pyranopterin phosphate + diphosphate. It participates in cofactor biosynthesis; molybdopterin biosynthesis. Catalyzes the conversion of (8S)-3',8-cyclo-7,8-dihydroguanosine 5'-triphosphate to cyclic pyranopterin monophosphate (cPMP). The chain is Cyclic pyranopterin monophosphate synthase from Thioalkalivibrio sulfidiphilus (strain HL-EbGR7).